The sequence spans 458 residues: UDP-N-acetylmuramoylalanine--D-glutamate ligase (458 aa).

Position 124 to 130 (124 to 130 (GSDGKTT)) interacts with ATP.

The protein belongs to the MurCDEF family.

The protein localises to the cytoplasm. The enzyme catalyses UDP-N-acetyl-alpha-D-muramoyl-L-alanine + D-glutamate + ATP = UDP-N-acetyl-alpha-D-muramoyl-L-alanyl-D-glutamate + ADP + phosphate + H(+). Its pathway is cell wall biogenesis; peptidoglycan biosynthesis. Functionally, cell wall formation. Catalyzes the addition of glutamate to the nucleotide precursor UDP-N-acetylmuramoyl-L-alanine (UMA). The protein is UDP-N-acetylmuramoylalanine--D-glutamate ligase of Clostridium novyi (strain NT).